The sequence spans 561 residues: Carboxylesterase 4A (561 aa).

An N-terminal signal peptide occupies residues methionine 1–glycine 20. A disulfide bridge connects residues cysteine 88 and cysteine 116. An N-linked (GlcNAc...) asparagine glycan is attached at asparagine 214. Serine 221 acts as the Acyl-ester intermediate in catalysis. Cysteine 273 and cysteine 284 are disulfide-bonded. A glycan (N-linked (GlcNAc...) asparagine) is linked at asparagine 276. Glutamate 353 functions as the Charge relay system in the catalytic mechanism. N-linked (GlcNAc...) asparagine glycosylation is present at asparagine 388. Histidine 467 functions as the Charge relay system in the catalytic mechanism.

This sequence belongs to the type-B carboxylesterase/lipase family.

It localises to the secreted. Its function is as follows. Probable carboxylesterase. The sequence is that of Carboxylesterase 4A (CES4A) from Homo sapiens (Human).